A 494-amino-acid chain; its full sequence is Alpha-amylase-related protein (494 aa).

The N-terminal stretch at 1–20 (MIKFALALTLCLAGASLSLA) is a signal peptide. Pyrrolidone carboxylic acid is present on Gln-21. Residues Cys-48 and Cys-104 are joined by a disulfide bond. Ca(2+) contacts are provided by Asn-118, Gln-169, and Asp-178. A disulfide bond links Cys-157 and Cys-171. Chloride is bound at residue Arg-206. The Nucleophile role is filled by Asp-208. His-212 provides a ligand contact to Ca(2+). The active-site Proton donor is Glu-245. Chloride contacts are provided by Asn-308 and Arg-343. Disulfide bonds link Cys-376–Cys-382, Cys-418–Cys-441, and Cys-448–Cys-460.

Belongs to the glycosyl hydrolase 13 family. As to quaternary structure, monomer. Ca(2+) serves as cofactor. Requires chloride as cofactor.

The protein localises to the secreted. It carries out the reaction Endohydrolysis of (1-&gt;4)-alpha-D-glucosidic linkages in polysaccharides containing three or more (1-&gt;4)-alpha-linked D-glucose units.. The sequence is that of Alpha-amylase-related protein (Amyrel) from Drosophila bakoue (Fruit fly).